Reading from the N-terminus, the 1063-residue chain is Exportin-1 (1063 aa).

Positions 43–109 (AQSILTTLKE…KKYVVSLIIK (67 aa)) constitute an Importin N-terminal domain. The tract at residues 1034-1063 (AEEQSNKHQMQRNIPGMLNPHELPEDMQDE) is disordered.

Belongs to the exportin family. Interacts with Clbn (via its N-terminus). Associates with the nuclear pore complex via interaction with mbo and Nup214. Interacts with target proteins containing NES sequences such as actin and dl. In terms of tissue distribution, high expression observed in the developing embryonic brain, hind gut and posterior spiracles shortly before dorsal closure; and in the ventral nerve cord, midgut and somatic musculature shortly after dorsal closure. Expression increases when the tissue is well developed.

It localises to the nucleus. Its subcellular location is the nucleus membrane. Its function is as follows. Receptor for the leucine-rich nuclear export signal (NES). Binds cooperatively to the NES on its target protein and to the small GTPase Ran in its active GTP-bound form. Involved in the export of dl, RpS2 and the pre-40S ribosome from the nucleus to the cytoplasm. Plays an important role in nuclear pore assembly by mediating nucleoporin condensation and biogenesis of annulate lamellae. Required for the function or maintenance of certain tissues such as brain and gut. In Drosophila melanogaster (Fruit fly), this protein is Exportin-1.